Here is a 118-residue protein sequence, read N- to C-terminus: Large ribosomal subunit protein bL20c (118 aa).

Belongs to the bacterial ribosomal protein bL20 family.

The protein localises to the plastid. Its function is as follows. Binds directly to 23S ribosomal RNA and is necessary for the in vitro assembly process of the 50S ribosomal subunit. It is not involved in the protein synthesizing functions of that subunit. This Cuscuta reflexa (Southern Asian dodder) protein is Large ribosomal subunit protein bL20c (rpl20).